We begin with the raw amino-acid sequence, 67 residues long: DNA-directed RNA polymerase subunit omega (67 aa).

This sequence belongs to the RNA polymerase subunit omega family. The RNAP catalytic core consists of 2 alpha, 1 beta, 1 beta' and 1 omega subunit. When a sigma factor is associated with the core the holoenzyme is formed, which can initiate transcription.

It carries out the reaction RNA(n) + a ribonucleoside 5'-triphosphate = RNA(n+1) + diphosphate. Its function is as follows. Promotes RNA polymerase assembly. Latches the N- and C-terminal regions of the beta' subunit thereby facilitating its interaction with the beta and alpha subunits. This chain is DNA-directed RNA polymerase subunit omega, found in Burkholderia pseudomallei (strain 1106a).